A 298-amino-acid polypeptide reads, in one-letter code: UDP-N-acetylenolpyruvoylglucosamine reductase (298 aa).

One can recognise an FAD-binding PCMH-type domain in the interval Lys26–Gly191. Arg170 is an active-site residue. Residue Ser220 is the Proton donor of the active site. Glu290 is an active-site residue.

This sequence belongs to the MurB family. Requires FAD as cofactor.

The protein resides in the cytoplasm. It carries out the reaction UDP-N-acetyl-alpha-D-muramate + NADP(+) = UDP-N-acetyl-3-O-(1-carboxyvinyl)-alpha-D-glucosamine + NADPH + H(+). It functions in the pathway cell wall biogenesis; peptidoglycan biosynthesis. In terms of biological role, cell wall formation. The protein is UDP-N-acetylenolpyruvoylglucosamine reductase of Lactobacillus helveticus (strain DPC 4571).